The chain runs to 329 residues: MTATKQHKKVILVGDGAVGSSYAFALVNQGIAQELGIIEIPQLFNKAVGDAEDLSHALAFTSPKKIYAAKYEDCADADLVVITAGAPQKPGETRLDLVGKNLAINKSIVTEVVKSGFKGIFLVAANPVDVLTYSTWKFSGFPKERVIGSGTSLDSARFRQALAEKLDVDARSVHAYIMGEHGDSEFAVWSHANVAGVNLESYLKDVQNVEEAELVELFEGVRDAAYSIINKKGATFYGIAVALARITKAILNDENAVLPLSVFQEGQYANVTDCYIGQPAIVGAHGIVRPVNIPLNDAEQQKMEASAKELKAIIDEAFSKEEFASACKN.

Residues valine 18, glutamate 39, lysine 46, tyrosine 71, and 85 to 86 (GA) contribute to the NAD(+) site. Substrate is bound by residues glutamine 88 and arginine 94. Residues serine 107, 124–126 (AAN), and serine 149 contribute to the NAD(+) site. 126-129 (NPVD) is a binding site for substrate. 154 to 157 (DSAR) contributes to the substrate binding site. Positions 159 and 174 each coordinate beta-D-fructose 1,6-bisphosphate. Histidine 181 acts as the Proton acceptor in catalysis. Tyrosine 226 carries the phosphotyrosine modification. Threonine 235 is a substrate binding site.

It belongs to the LDH/MDH superfamily. LDH family. Homotetramer.

The protein localises to the cytoplasm. It carries out the reaction (S)-lactate + NAD(+) = pyruvate + NADH + H(+). The protein operates within fermentation; pyruvate fermentation to lactate; (S)-lactate from pyruvate: step 1/1. Allosterically activated by fructose 1,6-bisphosphate (FBP). In terms of biological role, catalyzes the conversion of lactate to pyruvate. This chain is L-lactate dehydrogenase, found in Streptococcus equinus (Streptococcus bovis).